The primary structure comprises 1199 residues: DNA-directed RNA polymerase subunit beta' (1199 aa).

Cys-60, Cys-62, Cys-75, and Cys-78 together coordinate Zn(2+). 3 residues coordinate Mg(2+): Asp-449, Asp-451, and Asp-453. Cys-818, Cys-892, Cys-899, and Cys-902 together coordinate Zn(2+).

Belongs to the RNA polymerase beta' chain family. In terms of assembly, the RNAP catalytic core consists of 2 alpha, 1 beta, 1 beta' and 1 omega subunit. When a sigma factor is associated with the core the holoenzyme is formed, which can initiate transcription. Mg(2+) is required as a cofactor. The cofactor is Zn(2+).

The enzyme catalyses RNA(n) + a ribonucleoside 5'-triphosphate = RNA(n+1) + diphosphate. Its function is as follows. DNA-dependent RNA polymerase catalyzes the transcription of DNA into RNA using the four ribonucleoside triphosphates as substrates. This Bacillus velezensis (strain DSM 23117 / BGSC 10A6 / LMG 26770 / FZB42) (Bacillus amyloliquefaciens subsp. plantarum) protein is DNA-directed RNA polymerase subunit beta'.